Here is a 492-residue protein sequence, read N- to C-terminus: uncharacterized protein (492 aa).

12 helical membrane-spanning segments follow: residues 13–33 (LGFILASVGSAIGLGNIWRFG), 42–62 (GAFLIPYIVALLCVGIPLMIL), 97–117 (FIITSYYVVIIAWCLYYLIIL), 150–170 (GILVSTLAVWGIVALILSAGI), 180–200 (IMIPFLLFLIILLVLNALTLP), 222–242 (VWLSAFSQIFFSLSLGFGILI), 258–278 (AVTVSLLNCGFSFLAGFAVFG), 320–340 (FGIVFFLALVFAGISSAVSIV), 359–379 (LLAVLALFIIISPIFTTGAGL), 391–411 (GYLLPIAAILEIIIAIWLFGG), 428–448 (VWWKYLAGVVSPIILTAVVFL), and 463–483 (TTYVIFGALIIPLAFVVSVIL).

It belongs to the sodium:neurotransmitter symporter (SNF) (TC 2.A.22) family.

The protein resides in the cell membrane. Functionally, putative sodium-dependent transporter. This is an uncharacterized protein from Methanocaldococcus jannaschii (strain ATCC 43067 / DSM 2661 / JAL-1 / JCM 10045 / NBRC 100440) (Methanococcus jannaschii).